A 227-amino-acid polypeptide reads, in one-letter code: Ribose-5-phosphate isomerase A (227 aa).

Substrate is bound by residues 26-29, 82-85, and 95-98; these read TGST, DGAD, and KGGG. Catalysis depends on Glu104, which acts as the Proton acceptor. Residue Lys122 participates in substrate binding.

This sequence belongs to the ribose 5-phosphate isomerase family. As to quaternary structure, homodimer.

It catalyses the reaction aldehydo-D-ribose 5-phosphate = D-ribulose 5-phosphate. It participates in carbohydrate degradation; pentose phosphate pathway; D-ribose 5-phosphate from D-ribulose 5-phosphate (non-oxidative stage): step 1/1. In terms of biological role, catalyzes the reversible conversion of ribose-5-phosphate to ribulose 5-phosphate. This chain is Ribose-5-phosphate isomerase A, found in Streptococcus pneumoniae (strain Hungary19A-6).